A 622-amino-acid polypeptide reads, in one-letter code: Serine/threonine-protein kinase PknB (622 aa).

Topologically, residues 1 to 328 (MTTPPHLSDR…TESDGSIGRW (328 aa)) are cytoplasmic. Residues 11-273 (YELGDILGFG…TAAEMRADLI (263 aa)) form the Protein kinase domain. ATP contacts are provided by residues 17-25 (LGFGGMSEV), K40, and 93-95 (EYV). The active-site Proton acceptor is D138. Residues 140-143 (KPAN) and D156 each bind ATP. Mg(2+) contacts are provided by N143 and D156. S166 and S168 each carry phosphoserine; by autocatalysis. Phosphothreonine; by autocatalysis is present on residues T170, T172, and T308. The chain crosses the membrane as a helical span at residues 329 to 349 (VAVVAVLAVLTIAIVAAFNTF). Residues 350–622 (GGNTRDVQVP…DGIITLKFGQ (273 aa)) are Extracellular-facing. 4 consecutive PASTA domains span residues 352-418 (NTRD…NVST), 419-486 (GPEQ…IVGS), 487-553 (GPET…QVSK), and 554-622 (GNQF…KFGQ). Positions 381–404 (RTLQKPDSTIPPDHVISTEPGANA) are disordered.

Belongs to the protein kinase superfamily. Ser/Thr protein kinase family. Homodimer. In terms of processing, autophosphorylated. Dephosphorylated by PstP.

It is found in the cell membrane. It carries out the reaction L-seryl-[protein] + ATP = O-phospho-L-seryl-[protein] + ADP + H(+). The enzyme catalyses L-threonyl-[protein] + ATP = O-phospho-L-threonyl-[protein] + ADP + H(+). Functionally, protein kinase that regulates many aspects of mycobacterial physiology. Is a key component of a signal transduction pathway that regulates cell growth, cell shape and cell division via phosphorylation of target proteins. This chain is Serine/threonine-protein kinase PknB (pknB), found in Mycobacterium leprae (strain TN).